The chain runs to 252 residues: MSGHSKWHTIRRAKSANDQRRGQLFTKLARDITIATREGGSGDPELNFRLRLAIEKARANNMPNENIQRAIERGLGKSNEAAIEEIFYEGYGPGGVAILIEAATDNRNRTSSDVRATFNKNGGSPGEPGSVSWMFEQKGLITVDLSATKRDPDELQLLAIDAGADDVIVDDETLEIYCEWTQLNAVRQALLDQGVPISNAEKIMRAKTLIQPDEKDALAALRLIEKLEDLDDVQKVYSNLDITTELVERFDS.

Residues 1–14 are compositionally biased toward basic residues; that stretch reads MSGHSKWHTIRRAK. The disordered stretch occupies residues 1-22; sequence MSGHSKWHTIRRAKSANDQRRG.

Belongs to the TACO1 family.

It localises to the cytoplasm. This Chloroflexus aggregans (strain MD-66 / DSM 9485) protein is Probable transcriptional regulatory protein Cagg_2594.